The following is a 297-amino-acid chain: Probable endonuclease 4 (297 aa).

The tract at residues 1-21 is disordered; sequence MPEIGAHVSAAGGPQRAPERG. The Zn(2+) site is built by histidine 67, histidine 107, glutamate 145, aspartate 179, histidine 182, histidine 216, aspartate 229, histidine 231, and glutamate 261.

Belongs to the AP endonuclease 2 family. The cofactor is Zn(2+).

The enzyme catalyses Endonucleolytic cleavage to 5'-phosphooligonucleotide end-products.. Its function is as follows. Endonuclease IV plays a role in DNA repair. It cleaves phosphodiester bonds at apurinic or apyrimidinic (AP) sites, generating a 3'-hydroxyl group and a 5'-terminal sugar phosphate. The polypeptide is Probable endonuclease 4 (Halorhodospira halophila (strain DSM 244 / SL1) (Ectothiorhodospira halophila (strain DSM 244 / SL1))).